A 348-amino-acid polypeptide reads, in one-letter code: UDP-3-O-acylglucosamine N-acyltransferase (348 aa).

Histidine 241 serves as the catalytic Proton acceptor.

It belongs to the transferase hexapeptide repeat family. LpxD subfamily. In terms of assembly, homotrimer.

It catalyses the reaction a UDP-3-O-[(3R)-3-hydroxyacyl]-alpha-D-glucosamine + a (3R)-hydroxyacyl-[ACP] = a UDP-2-N,3-O-bis[(3R)-3-hydroxyacyl]-alpha-D-glucosamine + holo-[ACP] + H(+). It functions in the pathway bacterial outer membrane biogenesis; LPS lipid A biosynthesis. Catalyzes the N-acylation of UDP-3-O-acylglucosamine using 3-hydroxyacyl-ACP as the acyl donor. Is involved in the biosynthesis of lipid A, a phosphorylated glycolipid that anchors the lipopolysaccharide to the outer membrane of the cell. The chain is UDP-3-O-acylglucosamine N-acyltransferase from Neisseria meningitidis serogroup C / serotype 2a (strain ATCC 700532 / DSM 15464 / FAM18).